A 439-amino-acid polypeptide reads, in one-letter code: Hemagglutinin-esterase (439 aa).

The N-terminal stretch at 1–22 (MGRMCIAMAPRTLLLLIGCQLV) is a signal peptide. Positions 12-132 (TLLLLIGCQL…DNNKWMGNKA (121 aa)) are esterase domain 1. The Virion surface portion of the chain corresponds to 23-407 (FGFNEPINIV…PVCLYDPLPV (385 aa)). Serine 45 acts as the Nucleophile in catalysis. Cysteine 49 and cysteine 70 are joined by a disulfide. Asparagine 94 is a glycosylation site (N-linked (GlcNAc...) asparagine; by host). A disulfide bridge links cysteine 118 with cysteine 167. The tract at residues 133-281 (RFYALLYKKM…GNYKAVSLEY (149 aa)) is receptor binding. Residues asparagine 196, asparagine 246, asparagine 309, and asparagine 316 are each glycosylated (N-linked (GlcNAc...) asparagine; by host). 2 disulfide bridges follow: cysteine 202–cysteine 291 and cysteine 210–cysteine 264. The segment at 282-395 (LLTIPSKAIC…HCPTAANIGY (114 aa)) is esterase domain 2. Cysteine 322 and cysteine 327 are joined by a disulfide. Asparagine 331 carries an N-linked (GlcNAc...) asparagine; by host glycan. Active-site charge relay system residues include aspartate 342 and histidine 345. N-linked (GlcNAc...) asparagine; by host glycans are attached at residues asparagine 360 and asparagine 374. Cysteines 363 and 387 form a disulfide. A helical transmembrane segment spans residues 408–428 (ILLGVLLGIAVLIIVFLILYF). The Intravirion segment spans residues 429 to 439 (MADSSVRLHEA).

It belongs to the influenza type C/coronaviruses hemagglutinin-esterase family. Homodimer; disulfide-linked. Forms a complex with the M protein in the pre-Golgi. Associates then with S-M complex to form a ternary complex S-M-HE. In terms of processing, N-glycosylated in the host RER.

Its subcellular location is the virion membrane. The protein localises to the host cell membrane. It carries out the reaction N-acetyl-9-O-acetylneuraminate + H2O = N-acetylneuraminate + acetate + H(+). The enzyme catalyses N-acetyl-4-O-acetylneuraminate + H2O = N-acetylneuraminate + acetate + H(+). Functionally, structural protein that makes short spikes at the surface of the virus. Contains receptor binding and receptor-destroying activities. Mediates de-O-acetylation of N-acetyl-4-O-acetylneuraminic acid, which is probably the receptor determinant recognized by the virus on the surface of erythrocytes and susceptible cells. This receptor-destroying activity is important for virus release as it probably helps preventing self-aggregation and ensures the efficient spread of the progeny virus from cell to cell. May serve as a secondary viral attachment protein for initiating infection, the spike protein being the major one. May become a target for both the humoral and the cellular branches of the immune system. This Rat coronavirus (strain 681) (RCV-SDAV) protein is Hemagglutinin-esterase.